The chain runs to 432 residues: C4-dicarboxylate transport protein (432 aa).

Helical transmembrane passes span 8–28 (ILYV…HYWP), 44–64 (LIKM…IAGM), 78–98 (LLYF…AAHL), 148–168 (GDIL…AVLG), 188–208 (IVHV…AFTI), 222–242 (LIGT…GTIA), 307–327 (IYMT…LTLM), and 355–375 (AATL…ILGI).

It belongs to the dicarboxylate/amino acid:cation symporter (DAACS) (TC 2.A.23) family.

The protein resides in the cell inner membrane. In terms of biological role, responsible for the transport of dicarboxylates such as succinate, fumarate, and malate from the periplasm across the membrane. The polypeptide is C4-dicarboxylate transport protein (Cupriavidus necator (strain ATCC 17699 / DSM 428 / KCTC 22496 / NCIMB 10442 / H16 / Stanier 337) (Ralstonia eutropha)).